Here is a 185-residue protein sequence, read N- to C-terminus: Ribosome-recycling factor (185 aa).

Belongs to the RRF family.

The protein localises to the cytoplasm. Functionally, responsible for the release of ribosomes from messenger RNA at the termination of protein biosynthesis. May increase the efficiency of translation by recycling ribosomes from one round of translation to another. The chain is Ribosome-recycling factor from Chloroflexus aurantiacus (strain ATCC 29364 / DSM 637 / Y-400-fl).